We begin with the raw amino-acid sequence, 708 residues long: Leukotoxin translocation ATP-binding protein LktB (708 aa).

The Peptidase C39 domain maps to M1–V126. Positions F155 to Q437 constitute an ABC transmembrane type-1 domain. The next 5 helical transmembrane spans lie at L159–V179, L192–L212, A270–Y290, L296–L316, and V389–G409. The region spanning I469–Q704 is the ABC transporter domain. G503–S510 is a binding site for ATP.

Belongs to the ABC transporter superfamily. Protein-1 exporter (TC 3.A.1.109) family. As to quaternary structure, homodimer.

It is found in the cell inner membrane. The enzyme catalyses ATP + H2O + proteinSide 1 = ADP + phosphate + proteinSide 2.. In terms of biological role, part of the ABC transporter complex LktBD involved in leukotoxin export. Transmembrane domains (TMD) form a pore in the inner membrane and the ATP-binding domain (NBD) is responsible for energy generation. The chain is Leukotoxin translocation ATP-binding protein LktB (lktB) from Mannheimia haemolytica (Pasteurella haemolytica).